The following is a 693-amino-acid chain: Polyribonucleotide nucleotidyltransferase (693 aa).

Mg(2+) contacts are provided by Asp-489 and Asp-495. Residues 556-615 (PQIHVMNINPAKIKDVVGRGGATVKGIVEKTGAQIDTSDSGEVKVFAKDKKSMDMAVAMI) form the KH domain. Residues 625–693 (GQVYKGKIVK…GRVKLSLVAR (69 aa)) enclose the S1 motif domain.

The protein belongs to the polyribonucleotide nucleotidyltransferase family. In terms of assembly, component of the RNA degradosome, which is a multiprotein complex involved in RNA processing and mRNA degradation. The cofactor is Mg(2+).

The protein resides in the cytoplasm. It carries out the reaction RNA(n+1) + phosphate = RNA(n) + a ribonucleoside 5'-diphosphate. Functionally, involved in mRNA degradation. Catalyzes the phosphorolysis of single-stranded polyribonucleotides processively in the 3'- to 5'-direction. This Francisella tularensis subsp. mediasiatica (strain FSC147) protein is Polyribonucleotide nucleotidyltransferase.